We begin with the raw amino-acid sequence, 65 residues long: Ferredoxin-like protein in vnf region (65 aa).

4Fe-4S ferredoxin-type domains are found at residues 2–30 (AMAI…FRDD) and 32–65 (YAIE…PLDD). Cysteine 10, cysteine 13, cysteine 16, cysteine 20, cysteine 39, cysteine 42, cysteine 50, and cysteine 54 together coordinate [4Fe-4S] cluster.

[4Fe-4S] cluster is required as a cofactor.

This chain is Ferredoxin-like protein in vnf region, found in Azotobacter vinelandii.